A 178-amino-acid polypeptide reads, in one-letter code: Signal peptidase complex subunit 2 (178 aa).

Over 1–37 (MSSAKPINVYSIPELNQALDEALPSVFARLNYERSYA) the chain is Cytoplasmic. The chain crosses the membrane as a helical span at residues 38-58 (LLDAKLYIGYSIAVVAGLSFF). At 59–67 (LDKKFERDQ) the chain is on the lumenal side. The chain crosses the membrane as a helical span at residues 68-88 (IVTYQKLLVGAYFVLSLLFWY). The Cytoplasmic segment spans residues 89-178 (FSRFIEKGTV…HNVLDTKKNE (90 aa)).

Belongs to the SPCS2 family. As to quaternary structure, component of the signal peptidase complex (SPC) composed of a catalytic subunit SEC11 and three accessory subunits SPC1, SPC2 and SPC3. The complex induces a local thinning of the ER membrane which is used to measure the length of the signal peptide (SP) h-region of protein substrates. This ensures the selectivity of the complex towards h-regions shorter than 18-20 amino acids. SPC associates with the translocon complex. Interacts with SBH1 and SEB2/SBH2.

It localises to the endoplasmic reticulum membrane. Functionally, component of the signal peptidase complex (SPC) which catalyzes the cleavage of N-terminal signal sequences from nascent proteins as they are translocated into the lumen of the endoplasmic reticulum. Enhances the enzymatic activity of SPC and facilitates the interactions between different components of the translocation site. The protein is Signal peptidase complex subunit 2 (SPC2) of Saccharomyces cerevisiae (strain ATCC 204508 / S288c) (Baker's yeast).